The following is a 343-amino-acid chain: Dihydroorotate dehydrogenase (quinone) (343 aa).

Residues 58-62 (AGYDK) and Ser82 each bind FMN. A substrate-binding site is contributed by Lys62. Substrate is bound at residue 107-111 (NRMGF). Positions 136 and 167 each coordinate FMN. Asn167 contacts substrate. The active-site Nucleophile is Ser170. Substrate is bound at residue Asn172. Positions 206 and 234 each coordinate FMN. Residue 235 to 236 (NT) participates in substrate binding. Residues Gly256, Gly285, and 306–307 (YS) contribute to the FMN site.

This sequence belongs to the dihydroorotate dehydrogenase family. Type 2 subfamily. In terms of assembly, monomer. It depends on FMN as a cofactor.

The protein localises to the cell membrane. The enzyme catalyses (S)-dihydroorotate + a quinone = orotate + a quinol. The protein operates within pyrimidine metabolism; UMP biosynthesis via de novo pathway; orotate from (S)-dihydroorotate (quinone route): step 1/1. In terms of biological role, catalyzes the conversion of dihydroorotate to orotate with quinone as electron acceptor. This chain is Dihydroorotate dehydrogenase (quinone), found in Erythrobacter litoralis (strain HTCC2594).